A 485-amino-acid chain; its full sequence is uncharacterized protein (485 aa).

The next 3 membrane-spanning stretches (helical) occupy residues 284–304 (LLALNGLFTLMISHNLDYPLF), 328–348 (LLDLFLSSTHLPATLIASFIK), and 353–373 (LALTAPPGAIAIVIPFIYNCL).

The protein belongs to the CBF/MAK21 family.

It localises to the membrane. This is an uncharacterized protein from Schizosaccharomyces pombe (strain 972 / ATCC 24843) (Fission yeast).